Reading from the N-terminus, the 142-residue chain is MRNFDLSPLMRQWIGFDKLANALQNAGESQSFPPYNIEKSDDNHYRITLALAGFRQEDLEILLEGTRLSVKGTPEQPKEEKKWLHQGLMNQPFSLSFTLAENMEVSGATFVNGLLHIDLIRNEPEPIAAQRIAISERPALNS.

Positions 26 to 137 (AGESQSFPPY…AAQRIAISER (112 aa)) constitute a sHSP domain.

It belongs to the small heat shock protein (HSP20) family. Homodimer. Forms homomultimers of about 100-150 subunits at optimal growth temperatures. Conformation changes to oligomers at high temperatures or high ionic concentrations. The decrease in size of the multimers is accompanied by an increase in chaperone activity.

Its subcellular location is the cytoplasm. In terms of biological role, associates with aggregated proteins, together with IbpA, to stabilize and protect them from irreversible denaturation and extensive proteolysis during heat shock and oxidative stress. Aggregated proteins bound to the IbpAB complex are more efficiently refolded and reactivated by the ATP-dependent chaperone systems ClpB and DnaK/DnaJ/GrpE. Its activity is ATP-independent. This Escherichia coli O7:K1 (strain IAI39 / ExPEC) protein is Small heat shock protein IbpB.